The primary structure comprises 356 residues: Peptide chain release factor 1 (356 aa).

Gln-232 carries the N5-methylglutamine modification. The disordered stretch occupies residues 281 to 301; sequence ERQSSELSADRKAQVGSGDRS.

It belongs to the prokaryotic/mitochondrial release factor family. Post-translationally, methylated by PrmC. Methylation increases the termination efficiency of RF1.

The protein localises to the cytoplasm. Peptide chain release factor 1 directs the termination of translation in response to the peptide chain termination codons UAG and UAA. This chain is Peptide chain release factor 1, found in Desulfovibrio desulfuricans (strain ATCC 27774 / DSM 6949 / MB).